The following is a 498-amino-acid chain: Putrescine N-hydroxylase (498 aa).

Residues F23, D43, K45, W50, H51, and Q62 each coordinate FAD. Q62 and R104 together coordinate NADP(+). V127 is an FAD binding site. 4 residues coordinate NADP(+): S207, R231, Y275, and L309. Residues N386, P397, and L399 each coordinate FAD. The segment covering 443–474 (LESNTHSAVTPSKTRQGLNPSAKSVQQPSIEP) has biased composition (polar residues). The tract at residues 443-498 (LESNTHSAVTPSKTRQGLNPSAKSVQQPSIEPQTALRIAPTGGNVSALMAPNKEAQ) is disordered.

The protein belongs to the lysine N(6)-hydroxylase/L-ornithine N(5)-oxygenase family. The cofactor is FAD.

It carries out the reaction putrescine + NADPH + O2 = N-hydroxyputrescine + NADP(+) + H2O. The protein operates within siderophore biosynthesis. Its function is as follows. N-hydroxylating monooxygenase involved in the biosynthesis of the siderophore putrebactin. Catalyzes the N-hydroxylation of the aliphatic diamine putrescine into N-hydroxyputrescine (NHP). This is Putrescine N-hydroxylase from Shewanella oneidensis (strain ATCC 700550 / JCM 31522 / CIP 106686 / LMG 19005 / NCIMB 14063 / MR-1).